The sequence spans 376 residues: MGGGGSALRVCADHRGGINWLSLSPDGQRLLTGSEDGTARLWSTADGQCCALLQGHESYVTFCQLEDEAAFTCSADCTIRRWDVLTGQCLQVYRGHTSIVNRILVANNQLFSSSYDRTARVWSVDKGQMSREFRGHRNCVLTLAYSAPWDLPSTPCAEEAAAGGLLVTGSTDGTAKVWQVASGCCHQTLRGHTGAVLCLVLDTPGHTAFTGSTDATIRAWDILSGEQLRVFREHRGSVICLELVNRLVYSGSADRTVKCWLADTGECVRTFTAHRRNVSALKYHAGTLFTGSGDACARAFDAQSGELRRVFRGHTFIINCIQVHGQVLYTASHDGALRLWDVRGLRGAPRPPPPMRSLSRLFSNKVGCAAAPLQPA.

8 WD repeats span residues 13–52 (DHRG…CCAL), 55–94 (GHES…QVYR), 95–132 (GHTS…MSRE), 135–188 (GHRN…CHQT), 191–232 (GHTG…RVFR), 234–272 (HRGS…RTFT), 274–310 (HRRN…LRRV), and 313–350 (GHTF…GAPR).

The sequence is that of WD repeat-containing protein 86 (WDR86) from Homo sapiens (Human).